Consider the following 436-residue polypeptide: Putative UDP-arabinose 4-epimerase 4 (436 aa).

Residues methionine 1 to glycine 20 form a disordered region. Residues methionine 1–lysine 60 are Cytoplasmic-facing. A helical; Signal-anchor for type II membrane protein membrane pass occupies residues leucine 61–phenylalanine 81. Topologically, residues threonine 82–tyrosine 436 are lumenal. An NAD(+)-binding site is contributed by histidine 96–leucine 127. Tyrosine 244 acts as the Proton acceptor in catalysis.

It belongs to the NAD(P)-dependent epimerase/dehydratase family. It depends on NAD(+) as a cofactor.

It is found in the golgi apparatus. The protein localises to the golgi stack membrane. The enzyme catalyses UDP-beta-L-arabinopyranose = UDP-alpha-D-xylose. It participates in nucleotide-sugar biosynthesis; UDP-L-arabinose biosynthesis; UDP-L-arabinose from UDP-alpha-D-xylose: step 1/1. Its pathway is cell wall biogenesis; cell wall polysaccharide biosynthesis. The sequence is that of Putative UDP-arabinose 4-epimerase 4 from Arabidopsis thaliana (Mouse-ear cress).